Consider the following 63-residue polypeptide: Short neurotoxin 2 (63 aa).

4 disulfides stabilise this stretch: Cys3–Cys21, Cys15–Cys39, Cys43–Cys49, and Cys50–Cys55.

This sequence belongs to the three-finger toxin family. Short-chain subfamily. Orphan group XVIII sub-subfamily. Expressed by the venom gland.

Its subcellular location is the secreted. In terms of biological role, blocks both the muscle-twitch response to nerve stimulation and the response to exogenous acetylcholine. This chain is Short neurotoxin 2, found in Bungarus fasciatus (Banded krait).